A 91-amino-acid chain; its full sequence is Putative defensin-like protein 221 (91 aa).

The first 19 residues, 1-19 (MKTLFFFLTIAVLVSSCTS), serve as a signal peptide directing secretion. 3 disulfide bridges follow: cysteine 61–cysteine 78, cysteine 64–cysteine 83, and cysteine 68–cysteine 85.

It belongs to the DEFL family.

It localises to the secreted. This Arabidopsis thaliana (Mouse-ear cress) protein is Putative defensin-like protein 221.